Reading from the N-terminus, the 1016-residue chain is Protein TIC110, chloroplastic (1016 aa).

Residues 1–51 (MNPSLVTAINAPISPSPRSPLLSHFLPTLPHRFSKSECLSRRRYRVSFPRS) constitute a chloroplast transit peptide. At S52 the chain carries N-acetylserine. Residues 52 to 95 (SAASSDQLSVSTQAKNPGIHGNKKELTGLQPIVEKMTPPVRLAT) are Stromal-facing. The chain crosses the membrane as a helical span at residues 96 to 116 (SAVVLAASLATGYGLGLRLAG). Over 117 to 118 (SR) the chain is Chloroplast intermembrane. A helical membrane pass occupies residues 119–139 (NIAFGGAAVAGAAGGAVVYAL). The Stromal segment spans residues 140–259 (NSAVPEVAAI…EREGDAEQRR (120 aa)). Residues 260–280 (AFMRLVYVSALVFGDASSFLL) form a helical membrane-spanning segment. Residues 281-368 (PWKRVLKVTD…SILKSRTRAA (88 aa)) lie on the Chloroplast intermembrane side of the membrane. A helical membrane pass occupies residues 369-386 (KSLASVVEELEKVLEFNN). Residues 387-632 (LLVSLKSHSE…RAAENRTDSA (246 aa)) are Stromal-facing. Residues 633–650 (KELKKMIAFNTLVVTEMV) form a helical membrane-spanning segment. Topologically, residues 651-719 (ADIKGESSDK…DDLPDRDRID (69 aa)) are chloroplast intermembrane. Residues 654-669 (KGESSDKAPEEDPVQE) show a composition bias toward basic and acidic residues. A disordered region spans residues 654-708 (KGESSDKAPEEDPVQEKEEDDEDEEWGSLESLRKTRPDKELAEKMGKPGQTEITL). Residues 670–680 (KEEDDEDEEWG) are compositionally biased toward acidic residues. A compositionally biased stretch (basic and acidic residues) spans 684-699 (SLRKTRPDKELAEKMG). The chain crosses the membrane as a helical span at residues 720–736 (LYKTYLLYCVTGEVTRI). At 737 to 1016 (PFGAQITTKR…SAAEEGNFVF (280 aa)) the chain is on the stromal side.

The protein belongs to the chloroplast envelope anion channel-forming Tic110 (TC 1.A.18) family. In terms of assembly, part of the Tic complex. Interacts with HSP70, HSP93 and TIC40. Interacts with the Toc complex components TOC33, TOC75 and TOC159. Interacts with LTD. As to expression, expressed in seedlings, flowers, leaves, stems and roots.

It localises to the plastid. Its subcellular location is the chloroplast inner membrane. In terms of biological role, involved in protein precursor import into chloroplasts. Forms a voltage-dependent cation-selective channel at the inner envelope of chloroplasts, which specifically responds to a transit peptide. Associates with both the precursor and mature forms of the preprotein. The sequence is that of Protein TIC110, chloroplastic (TIC110) from Arabidopsis thaliana (Mouse-ear cress).